Reading from the N-terminus, the 130-residue chain is Anti-adapter protein IraD (130 aa).

The protein belongs to the GpW/Gp25 family. IraD subfamily. In terms of assembly, interacts with RssB.

It localises to the cytoplasm. In terms of biological role, inhibits RpoS proteolysis by regulating RssB activity, thereby increasing the stability of the sigma stress factor RpoS during oxidative stress. Its effect on RpoS stability is due to its interaction with RssB, which probably blocks the interaction of RssB with RpoS, and the consequent delivery of the RssB-RpoS complex to the ClpXP protein degradation pathway. The polypeptide is Anti-adapter protein IraD (Escherichia coli O157:H7).